Consider the following 320-residue polypeptide: MKLKAMYSFLSDDLAAVEEELERAVQSEYGPLGEAALHLLQAGGKRIRPVFVLLAARFGQYDLERMKHVAVALELIHMASLVHDDVIDDADLRRGRPTIKAKWSNRFAMYTGDYLFARSLERMAELGNPRAHQVLAKTIVEVCRGEIEQIKDKYRFDQPLRTYLRRIRRKTALLIAASCQLGALAAGAPEPIVKRLYWFGHYVGMSFQITDDILDFTGTEEQLGKPAGSDLLQGNVTLPVLYALSDERVKAAIAAVGPETDVAEMAAVISAIKRTDAIERSYALSDRYLDKALHLLDGLPMNEARGLLRDLALYIGKRDY.

Isopentenyl diphosphate is bound by residues lysine 45, arginine 48, and histidine 77. The Mg(2+) site is built by aspartate 84 and aspartate 88. Residue arginine 93 coordinates all-trans-hexaprenyl diphosphate. Arginine 94 contributes to the isopentenyl diphosphate binding site. 3 residues coordinate all-trans-hexaprenyl diphosphate: lysine 170, threonine 171, and glutamine 208.

It belongs to the FPP/GGPP synthase family. As to quaternary structure, heterodimer of component I and II. Requires Mg(2+) as cofactor.

It carries out the reaction 4 isopentenyl diphosphate + (2E,6E)-farnesyl diphosphate = all-trans-heptaprenyl diphosphate + 4 diphosphate. Supplies heptaprenyl diphosphate, the precursor for the side chain of the isoprenoid quinone menaquinone-7 (MQ-7). The polypeptide is Heptaprenyl diphosphate synthase component 2 (hepT) (Geobacillus stearothermophilus (Bacillus stearothermophilus)).